A 207-amino-acid polypeptide reads, in one-letter code: Suppressor of IKBKE 1 (207 aa).

Coiled-coil stretches lie at residues threonine 4–glutamine 32 and aspartate 154–serine 193. The interval threonine 186–glutamine 207 is disordered. The segment covering glutamate 189–glutamate 199 has biased composition (basic and acidic residues).

The protein belongs to the SIKE family. In terms of assembly, interacts with IKBKE and TBK1 via its coiled coil region. Interaction with TBK1 is disrupted upon viral infection or TLR3 stimulation. Interacts with CDC42BPB. Associates with the STRIPAK core complex composed of PP2A catalytic and scaffolding subunits, the striatins (PP2A regulatory subunits), the striatin-associated proteins MOB4, STRIP1 and STRIP2, PDCD10 and members of the STE20 kinases, such as STK24 and STK26.

In terms of biological role, suppressor of IKK-epsilon. Associates with the striatin-interacting phosphatase and kinase (STRIPAK) core complex, forming the extended (SIKE1:SLMAP)STRIPAK complex. The (SIKE1:SLMAP)STRIPAK complex dephosphorylates STK3 leading to the inhibition of Hippo signaling and the control of cell growth. This is Suppressor of IKBKE 1 (sike1) from Xenopus tropicalis (Western clawed frog).